A 102-amino-acid polypeptide reads, in one-letter code: uncharacterized protein (102 aa).

Residues Cys-10, Cys-16, and Cys-55 each contribute to the [3Fe-4S] cluster site. Positions 66–102 (DAGDDERASADPARSPAEAERHAAKDQRIPGGHDGTV) are disordered. Over residues 82 to 93 (AEAERHAAKDQR) the composition is skewed to basic and acidic residues.

[3Fe-4S] cluster serves as cofactor.

In terms of biological role, electron transport protein for the cytochrome systems. This is an uncharacterized protein from Sinorhizobium fredii (strain NBRC 101917 / NGR234).